The following is a 242-amino-acid chain: ATP synthase subunit a (242 aa).

Transmembrane regions (helical) follow at residues 29 to 49, 84 to 104, 114 to 134, 140 to 160, 189 to 209, and 210 to 230; these read SSIYMLLASILALTYFYLAFY, FIPLVFSLFIFILFCNLLGMT, IIVTFTLAILVFLTVTIVGFV, FLTLFLPHGTPLWLAPLMIVI, VIAGFTVSLMIYLKFLPIPLM, and MILIGFEIFVAILQAYIFTIL.

The protein belongs to the ATPase A chain family. In terms of assembly, F-type ATPases have 2 components, CF(1) - the catalytic core - and CF(0) - the membrane proton channel. CF(1) has five subunits: alpha(3), beta(3), gamma(1), delta(1), epsilon(1). CF(0) has three main subunits: a(1), b(2) and c(9-12). The alpha and beta chains form an alternating ring which encloses part of the gamma chain. CF(1) is attached to CF(0) by a central stalk formed by the gamma and epsilon chains, while a peripheral stalk is formed by the delta and b chains.

It is found in the cell inner membrane. Its function is as follows. Key component of the proton channel; it plays a direct role in the translocation of protons across the membrane. The chain is ATP synthase subunit a from Rickettsia massiliae (strain Mtu5).